A 78-amino-acid chain; its full sequence is Small ribosomal subunit protein eS21 (78 aa).

The protein belongs to the eukaryotic ribosomal protein eS21 family.

This chain is Small ribosomal subunit protein eS21 (rps21), found in Dictyostelium discoideum (Social amoeba).